The chain runs to 276 residues: Glutathione S-transferase-like protein ustS (276 aa).

The region spanning 16–109 (STLPGTSKSW…HLDETYPDPP (94 aa)) is the GST N-terminal domain.

It belongs to the GST superfamily.

The protein operates within mycotoxin biosynthesis. Functionally, glutathione S-transferase-like protein; part of the gene cluster that mediates the biosynthesis of the secondary metabolite ustiloxin B, an antimitotic tetrapeptide. First, ustA is processed by the subtilisin-like endoprotease Kex2 that is outside the ustiloxin B gene cluster, at the C-terminal side of Arg-Lys, after transfer to Golgi apparatus through the endoplasmic reticulum (ER). Cleavage by KEX2 generates 16 peptides YAIG-I to YAIG-XVI. To process the precursor peptide further, at least two peptidases are necessary to cleave the N-terminal and C-terminal sides of the Tyr-Ala-Ile-Gly core peptide which serves as backbone for the synthesis of ustiloxin B, through cyclization and modification of the tyrosine with a non-protein coding amino acid, norvaline. One of the two peptidases must be the serine peptidase ustP; and the other pepdidase is probably ustH. Macrocyclization of the core peptide derived from ustA requires the tyrosinase ustQ, as well as the homologous oxidases ustYa and ustYb, and leads to the production of the first cyclization product N-desmethylustiloxin F. For the formation of N-desmethylustiloxin F, three oxidation steps are required, hydroxylation at the benzylic position, hydroxylation at either the aromatic ring of Tyr or beta-position of Ile, and oxidative cyclization. UstQ may catalyze the oxidation of a phenol moiety, whereas the ustYa and ustYb are most likely responsible for the remaining two-step oxidations. N-desmethylustiloxin F is then methylated by ustM to yield ustiloxin F which in turn substrate of the cytochrome P450 monooxygenase ustC which catalyzes the formation of S-deoxyustiloxin H. The flavoprotein monooxygenases ustF1 and ustF2 then participate in the modification of the side chain of S-deoxyustiloxin H, leading to the synthesis of an oxime intermediate, via ustiloxin H. Finally, carboxylative dehydration performed by the cysteine desulfurase-like protein ustD yields ustiloxin B. This chain is Glutathione S-transferase-like protein ustS, found in Aspergillus flavus (strain ATCC 200026 / FGSC A1120 / IAM 13836 / NRRL 3357 / JCM 12722 / SRRC 167).